The chain runs to 112 residues: Cell cycle protein GpsB (112 aa).

Residues 42–77 (YQKMADMNNEVVKLSEENHKLKKELEELRLRVATSR) are a coiled coil. Residues 74 to 96 (ATSRPQDNKNFSSNNSSSASNNV) are disordered. Low complexity predominate over residues 81–95 (NKNFSSNNSSSASNN).

Belongs to the GpsB family. Forms polymers through the coiled coil domains. Interacts with PBP1, MreC and EzrA.

It localises to the cytoplasm. In terms of biological role, divisome component that associates with the complex late in its assembly, after the Z-ring is formed, and is dependent on DivIC and PBP2B for its recruitment to the divisome. Together with EzrA, is a key component of the system that regulates PBP1 localization during cell cycle progression. Its main role could be the removal of PBP1 from the cell pole after pole maturation is completed. Also contributes to the recruitment of PBP1 to the division complex. Not essential for septum formation. The sequence is that of Cell cycle protein GpsB from Staphylococcus epidermidis (strain ATCC 12228 / FDA PCI 1200).